The sequence spans 114 residues: UPF0342 protein OEOE_0901 (114 aa).

It belongs to the UPF0342 family.

The protein is UPF0342 protein OEOE_0901 of Oenococcus oeni (strain ATCC BAA-331 / PSU-1).